Consider the following 316-residue polypeptide: Neuroguidin-B (316 aa).

Disordered stretches follow at residues Glu124–Lys169 and Val292–His316. The span at Asp145–Ala156 shows a compositional bias: acidic residues. The span at Lys296–His316 shows a compositional bias: basic residues.

Belongs to the SAS10 family. In terms of assembly, part of the small subunit (SSU) processome, composed of more than 70 proteins and the RNA chaperone small nucleolar RNA (snoRNA) U3.

The protein resides in the nucleus. It is found in the nucleolus. Its subcellular location is the chromosome. The protein localises to the centromere. It localises to the cytoplasm. The protein resides in the cell projection. It is found in the axon. Its subcellular location is the dendrite. The protein localises to the filopodium. Part of the small subunit (SSU) processome, first precursor of the small eukaryotic ribosomal subunit. During the assembly of the SSU processome in the nucleolus, many ribosome biogenesis factors, an RNA chaperone and ribosomal proteins associate with the nascent pre-rRNA and work in concert to generate RNA folding, modifications, rearrangements and cleavage as well as targeted degradation of pre-ribosomal RNA by the RNA exosome. Its dissociation from the complex determines the transition from state pre-A1 to state pre-A1*. May inhibit mRNA translation. This chain is Neuroguidin-B (ngdn-b), found in Xenopus laevis (African clawed frog).